A 214-amino-acid chain; its full sequence is Pyridoxine/pyridoxamine 5'-phosphate oxidase (214 aa).

Substrate contacts are provided by residues 8 to 11 (RTNY) and K66. FMN contacts are provided by residues 61 to 66 (RIVLIK), 76 to 77 (FT), R82, K83, and Q105. 3 residues coordinate substrate: Y123, R127, and S131. Residues 140–141 (QS) and W184 each bind FMN. 190–192 (RLH) is a substrate binding site. Residue R194 coordinates FMN.

It belongs to the pyridoxamine 5'-phosphate oxidase family. As to quaternary structure, homodimer. FMN serves as cofactor.

The enzyme catalyses pyridoxamine 5'-phosphate + O2 + H2O = pyridoxal 5'-phosphate + H2O2 + NH4(+). It carries out the reaction pyridoxine 5'-phosphate + O2 = pyridoxal 5'-phosphate + H2O2. It functions in the pathway cofactor metabolism; pyridoxal 5'-phosphate salvage; pyridoxal 5'-phosphate from pyridoxamine 5'-phosphate: step 1/1. It participates in cofactor metabolism; pyridoxal 5'-phosphate salvage; pyridoxal 5'-phosphate from pyridoxine 5'-phosphate: step 1/1. In terms of biological role, catalyzes the oxidation of either pyridoxine 5'-phosphate (PNP) or pyridoxamine 5'-phosphate (PMP) into pyridoxal 5'-phosphate (PLP). In Burkholderia thailandensis (strain ATCC 700388 / DSM 13276 / CCUG 48851 / CIP 106301 / E264), this protein is Pyridoxine/pyridoxamine 5'-phosphate oxidase.